A 148-amino-acid chain; its full sequence is Deoxyuridine 5'-triphosphate nucleotidohydrolase (148 aa).

Residues 67-69, N80, 84-86, and K94 each bind substrate; these read RSG and TID.

Belongs to the dUTPase family. Mg(2+) serves as cofactor.

It catalyses the reaction dUTP + H2O = dUMP + diphosphate + H(+). It functions in the pathway pyrimidine metabolism; dUMP biosynthesis; dUMP from dCTP (dUTP route): step 2/2. This enzyme is involved in nucleotide metabolism: it produces dUMP, the immediate precursor of thymidine nucleotides and it decreases the intracellular concentration of dUTP so that uracil cannot be incorporated into DNA. This Orientia tsutsugamushi (strain Boryong) (Rickettsia tsutsugamushi) protein is Deoxyuridine 5'-triphosphate nucleotidohydrolase.